The chain runs to 295 residues: MDQKQIEEIVRSVMASMGQTAPAPSEAKCATTTCAAPVTSESCALDLGSAEAKVWIGVENPHRADVLTELRRSTVARVCTGRAGPRPRTLALLRFLADHSRSKDTVLKEVPEEWVKAQGLLEVRSEISDKNLYLTRPDMGRRLCAEAVEALKAQCVANPDVQVVISDGLSTDAITVNYEEILPPLMAGLKQAGLKVGTPFFVRYGRVKIEDQIGEILGAKVVILLVGERPGLGQSESLSCYAVYSPRMATTVEADRTCISNIHQGGTPPVEAAAVIVDLAKRMLEQKASGINMTR.

Residues Val-207, Glu-228, and Cys-258 each contribute to the adenosylcob(III)alamin site.

Belongs to the EutC family. In terms of assembly, the basic unit is a heterodimer which dimerizes to form tetramers. The heterotetramers trimerize; 6 large subunits form a core ring with 6 small subunits projecting outwards. Adenosylcob(III)alamin is required as a cofactor.

The protein localises to the bacterial microcompartment. The enzyme catalyses ethanolamine = acetaldehyde + NH4(+). The protein operates within amine and polyamine degradation; ethanolamine degradation. Catalyzes the deamination of various vicinal amino-alcohols to oxo compounds. Allows this organism to utilize ethanolamine as the sole source of nitrogen and carbon in the presence of external vitamin B12. This Escherichia coli O157:H7 protein is Ethanolamine ammonia-lyase small subunit.